We begin with the raw amino-acid sequence, 404 residues long: Cysteine desulfurase IscS (404 aa).

Pyridoxal 5'-phosphate-binding positions include 75-76 (AT), asparagine 155, glutamine 183, and 203-205 (SAH). Lysine 206 carries the post-translational modification N6-(pyridoxal phosphate)lysine. Position 243 (threonine 243) interacts with pyridoxal 5'-phosphate. Cysteine 328 acts as the Cysteine persulfide intermediate in catalysis. Cysteine 328 is a binding site for [2Fe-2S] cluster.

Belongs to the class-V pyridoxal-phosphate-dependent aminotransferase family. NifS/IscS subfamily. As to quaternary structure, homodimer. Forms a heterotetramer with IscU, interacts with other sulfur acceptors. The cofactor is pyridoxal 5'-phosphate.

The protein resides in the cytoplasm. The catalysed reaction is (sulfur carrier)-H + L-cysteine = (sulfur carrier)-SH + L-alanine. The protein operates within cofactor biosynthesis; iron-sulfur cluster biosynthesis. In terms of biological role, master enzyme that delivers sulfur to a number of partners involved in Fe-S cluster assembly, tRNA modification or cofactor biosynthesis. Catalyzes the removal of elemental sulfur atoms from cysteine to produce alanine. Functions as a sulfur delivery protein for Fe-S cluster synthesis onto IscU, an Fe-S scaffold assembly protein, as well as other S acceptor proteins. This is Cysteine desulfurase IscS from Pseudomonas aeruginosa (strain LESB58).